The primary structure comprises 126 residues: Holo-[acyl-carrier-protein] synthase (126 aa).

Residues aspartate 9 and glutamate 58 each contribute to the Mg(2+) site.

It belongs to the P-Pant transferase superfamily. AcpS family. It depends on Mg(2+) as a cofactor.

The protein localises to the cytoplasm. It carries out the reaction apo-[ACP] + CoA = holo-[ACP] + adenosine 3',5'-bisphosphate + H(+). In terms of biological role, transfers the 4'-phosphopantetheine moiety from coenzyme A to a Ser of acyl-carrier-protein. In Buchnera aphidicola subsp. Cinara cedri (strain Cc), this protein is Holo-[acyl-carrier-protein] synthase.